The primary structure comprises 264 residues: MIQSKKLTLGICLVLLIILIVGYVIMTKTNGRNAQIKDTFNQTLKLYPTKNLDGFYDKEGFRDQEFKKGDKGTWIVNSEMVIEPKGKDMETRGMVLYINRNTRTTKGYYFISEMTDDSNGRPKDDEKRYPVKMEHNKIIPTKPLPNDKLKKEIENLKFFVQYGNFKDINDYKDGDISYNPNVPSYSAKYQLNNDDYNVQQLRKRYDIPTKQAPKLLLKGDGDLKGSSVGSKNIEFTFVENKEENIYFTDSVQYTPSEDTRYESN.

Residues 7-27 (LTLGICLVLLIILIVGYVIMT) traverse the membrane as a helical segment.

The protein belongs to the staphylococcal tandem lipoprotein family.

It localises to the cell membrane. This is an uncharacterized protein from Staphylococcus aureus (strain MRSA252).